The following is a 341-amino-acid chain: Methionine import ATP-binding protein MetN 3 (341 aa).

The ABC transporter domain maps to 2-241; sequence IEFQNVTKTF…PSHETTKRFI (240 aa). 38 to 45 contributes to the ATP binding site; that stretch reads GFSGAGKS.

This sequence belongs to the ABC transporter superfamily. Methionine importer (TC 3.A.1.24) family. As to quaternary structure, the complex is composed of two ATP-binding proteins (MetN), two transmembrane proteins (MetI) and a solute-binding protein (MetQ).

The protein localises to the cell membrane. It carries out the reaction L-methionine(out) + ATP + H2O = L-methionine(in) + ADP + phosphate + H(+). The enzyme catalyses D-methionine(out) + ATP + H2O = D-methionine(in) + ADP + phosphate + H(+). In terms of biological role, part of the ABC transporter complex MetNIQ involved in methionine import. Responsible for energy coupling to the transport system. This Oceanobacillus iheyensis (strain DSM 14371 / CIP 107618 / JCM 11309 / KCTC 3954 / HTE831) protein is Methionine import ATP-binding protein MetN 3.